A 793-amino-acid chain; its full sequence is Ent-copalyl diphosphate synthase, chloroplastic (793 aa).

A chloroplast-targeting transit peptide spans 1-47; sequence MPLASNPVAFLPSSTAHGDLPAAAFSRSSAGCLQLCRPLTPTSSLQC. Mg(2+)-binding residues include Asp372 and Asp374. The DXDD motif signature appears at 372 to 375; it reads DIDD.

This sequence belongs to the terpene synthase family. Mg(2+) serves as cofactor.

It is found in the plastid. The protein resides in the chloroplast. The enzyme catalyses (2E,6E,10E)-geranylgeranyl diphosphate = ent-copalyl diphosphate. The protein operates within plant hormone biosynthesis; gibberellin biosynthesis. In terms of biological role, catalyzes the conversion of geranylgeranyl diphosphate (GGPP) to the gibberellin precursor ent-copalyl diphosphate (CPP). The chain is Ent-copalyl diphosphate synthase, chloroplastic from Salvia miltiorrhiza (Chinese sage).